The following is a 364-amino-acid chain: Aminomethyltransferase (364 aa).

It belongs to the GcvT family. In terms of assembly, the glycine cleavage system is composed of four proteins: P, T, L and H.

The catalysed reaction is N(6)-[(R)-S(8)-aminomethyldihydrolipoyl]-L-lysyl-[protein] + (6S)-5,6,7,8-tetrahydrofolate = N(6)-[(R)-dihydrolipoyl]-L-lysyl-[protein] + (6R)-5,10-methylene-5,6,7,8-tetrahydrofolate + NH4(+). In terms of biological role, the glycine cleavage system catalyzes the degradation of glycine. The chain is Aminomethyltransferase from Staphylococcus carnosus (strain TM300).